The following is a 457-amino-acid chain: ATP synthase subunit beta (457 aa).

147–154 (GGAGVGKT) is an ATP binding site.

The protein belongs to the ATPase alpha/beta chains family. As to quaternary structure, F-type ATPases have 2 components, CF(1) - the catalytic core - and CF(0) - the membrane proton channel. CF(1) has five subunits: alpha(3), beta(3), gamma(1), delta(1), epsilon(1). CF(0) has three main subunits: a(1), b(2) and c(9-12). The alpha and beta chains form an alternating ring which encloses part of the gamma chain. CF(1) is attached to CF(0) by a central stalk formed by the gamma and epsilon chains, while a peripheral stalk is formed by the delta and b chains.

The protein localises to the cell inner membrane. The enzyme catalyses ATP + H2O + 4 H(+)(in) = ADP + phosphate + 5 H(+)(out). Functionally, produces ATP from ADP in the presence of a proton gradient across the membrane. The catalytic sites are hosted primarily by the beta subunits. This chain is ATP synthase subunit beta, found in Histophilus somni (strain 129Pt) (Haemophilus somnus).